The primary structure comprises 246 residues: Flagellar brake protein YcgR (246 aa).

Positions 122–234 constitute a PilZ domain; the sequence is QRREFFRIQT…PMETIIQRYV (113 aa).

This sequence belongs to the YcgR family. Monomer. Interacts with the flagellar basal bodies.

The protein localises to the bacterial flagellum basal body. Acts as a flagellar brake, regulating swimming and swarming in a bis-(3'-5') cyclic diguanylic acid (c-di-GMP)-dependent manner. Binds 1 c-di-GMP dimer per subunit. Increasing levels of c-di-GMP lead to decreased motility. The polypeptide is Flagellar brake protein YcgR (Chromobacterium violaceum (strain ATCC 12472 / DSM 30191 / JCM 1249 / CCUG 213 / NBRC 12614 / NCIMB 9131 / NCTC 9757 / MK)).